The chain runs to 66 residues: Large ribosomal subunit protein bL33 (66 aa).

It belongs to the bacterial ribosomal protein bL33 family.

This Synechococcus sp. (strain CC9902) protein is Large ribosomal subunit protein bL33.